The following is a 638-amino-acid chain: Voltage-gated potassium channel KCNC2 (638 aa).

Residues methionine 1–arginine 229 lie on the Cytoplasmic side of the membrane. Positions leucine 47–serine 75 are disordered. Positions proline 56–proline 72 are enriched in pro residues. Residues histidine 124, cysteine 130, cysteine 151, and cysteine 152 each contribute to the Zn(2+) site. Residues phenylalanine 230 to leucine 248 traverse the membrane as a helical segment. Residues asparagine 259 and asparagine 266 are each glycosylated (N-linked (GlcNAc...) asparagine). Residues tyrosine 284–phenylalanine 303 traverse the membrane as a helical segment. Topologically, residues serine 304–leucine 314 are cytoplasmic. Residues leucine 315–serine 337 form a helical membrane-spanning segment. A helical; Voltage-sensor membrane pass occupies residues phenylalanine 346–leucine 368. At arginine 369–glutamate 381 the chain is on the cytoplasmic side. Residues phenylalanine 382–tyrosine 401 form a helical membrane-spanning segment. Residues threonine 437, leucine 438, glycine 439, and tyrosine 440 each contribute to the K(+) site. The Selectivity filter motif lies at threonine 437–aspartate 442. Residues methionine 451–valine 473 traverse the membrane as a helical segment. At asparagine 474–leucine 638 the chain is on the cytoplasmic side. Positions serine 538–glycine 572 are disordered. Position 564 is a phosphoserine; by PKA (serine 564). The residue at position 600 (serine 600) is a Phosphoserine.

Belongs to the potassium channel family. C (Shaw) (TC 1.A.1.2) subfamily. Kv3.2/KCNC2 sub-subfamily. Homotetramer and heterotetramer with other channel-forming alpha subunits, such as KCNC1. Interacts with KCNC1. Homotetramer or heterotetramer channel activity is regulated by association with modulating ancillary subunits such as KCNE1, KCNE2 and KCNE3, creating a functionally diverse range of channel complexes. Interacts with KCNE1, KCNE2 and KCNE3. Post-translationally, phosphorylated by PKA in cortical synaptosomes. cAMP-dependent phosphorylation inhibits channel activity. Histamine H2 receptor- and PKA-induced phosphorylation extends action potential spike duration, reduces action potential spike amplitude, sustains maximum firing frequency in hippocampal interneurons; also reduces the incidence of high-frequency oscillations in hippocampal CA3 pyramidal cell layers. In terms of tissue distribution, expressed in neurons of the visual cortex during postnatal development. Expressed in neurons of the globus pallidus at postnatal age day 7 (P7), onward. Expressed in thalamic relay neurons. Expressed in neurons in layer IV and deeper cortical layers of the neocortex. Expressed in hippocampal interneurons. Expressed in nonpyramidal interneurons in the basolateral amygdala. Expressed in retinal ganglion cells (at protein level). Widely expressed in the brain. Expressed in numerous thalamic relay neurons throughout the dorsal thalamus. Expressed in interneurons of the deep layers V-VI of the cerebral cortex, the CA1 and CA3 pyramidal and dentate gyrus (DG) granule cells of the hippocampus, in neurons of the caudate-putamen, globus pallidus and subthalamic nucleus. Also expressed in the optic layer of interior colliculus, the inferior colliculus, the red nucleus, the medial geniculate, the ventral lateral lemiscus, the reticulotegmental nucleus and in the deep cerebellar nuclei. Expressed in globus pallidus (GP) neurons.

It is found in the cell membrane. The protein localises to the membrane. The protein resides in the perikaryon. It localises to the cell projection. Its subcellular location is the axon. It is found in the synapse. The protein localises to the synaptosome. The protein resides in the dendrite. It localises to the postsynaptic cell membrane. Its subcellular location is the presynaptic cell membrane. It is found in the apical cell membrane. The protein localises to the basolateral cell membrane. It carries out the reaction K(+)(in) = K(+)(out). Inhibited by Stichodactyla helianthus peptide ShK. Inhibited by millimolar levels of tetraethylammonium (TEA). Contrary to other channels, inhibited only by millimolar levels of 4-aminopyridine (4-AP). Functionally, voltage-gated potassium channel that mediates transmembrane potassium transport in excitable membranes, primarily in the brain. Contributes to the regulation of the fast action potential repolarization and in sustained high-frequency firing in neurons of the central nervous system. Homotetramer channels mediate delayed-rectifier voltage-dependent potassium currents that activate rapidly at high-threshold voltages and inactivate slowly. Forms tetrameric channels through which potassium ions pass in accordance with their electrochemical gradient. The channel alternates between opened and closed conformations in response to the voltage difference across the membrane. Can form functional homotetrameric channels and heterotetrameric channels that contain variable proportions of KCNC1, and possibly other family members as well; channel properties depend on the type of alpha subunits that are part of the channel. Channel properties may be modulated either by the association with ancillary subunits, such as KCNE1, KCNE2 and KCNE3 or indirectly by nitric oxide (NO) through a cGMP- and PKG-mediated signaling cascade, slowing channel activation and deactivation of delayed rectifier potassium channels. Contributes to fire sustained trains of very brief action potentials at high frequency in retinal ganglion cells, thalamocortical and suprachiasmatic nucleus (SCN) neurons and in hippocampal and neocortical interneurons. Sustained maximal action potential firing frequency in inhibitory hippocampal interneurons is negatively modulated by histamine H2 receptor activation in a cAMP- and protein kinase (PKA) phosphorylation-dependent manner. Plays a role in maintaining the fidelity of synaptic transmission in neocortical GABAergic interneurons by generating action potential (AP) repolarization at nerve terminals, thus reducing spike-evoked calcium influx and GABA neurotransmitter release. Required for long-range synchronization of gamma oscillations over distance in the neocortex. Contributes to the modulation of the circadian rhythm of spontaneous action potential firing in suprachiasmatic nucleus (SCN) neurons in a light-dependent manner. The protein is Voltage-gated potassium channel KCNC2 of Rattus norvegicus (Rat).